We begin with the raw amino-acid sequence, 133 residues long: Ribonuclease P protein component (133 aa).

This sequence belongs to the RnpA family. Consists of a catalytic RNA component (M1 or rnpB) and a protein subunit.

The enzyme catalyses Endonucleolytic cleavage of RNA, removing 5'-extranucleotides from tRNA precursor.. Its function is as follows. RNaseP catalyzes the removal of the 5'-leader sequence from pre-tRNA to produce the mature 5'-terminus. It can also cleave other RNA substrates such as 4.5S RNA. The protein component plays an auxiliary but essential role in vivo by binding to the 5'-leader sequence and broadening the substrate specificity of the ribozyme. In Corynebacterium glutamicum (strain ATCC 13032 / DSM 20300 / JCM 1318 / BCRC 11384 / CCUG 27702 / LMG 3730 / NBRC 12168 / NCIMB 10025 / NRRL B-2784 / 534), this protein is Ribonuclease P protein component.